We begin with the raw amino-acid sequence, 1826 residues long: Protein TIC 214 (1826 aa).

A run of 5 helical transmembrane segments spans residues 18–38 (IINS…FSIG), 67–87 (FITG…HLAL), 127–147 (LSIQ…HFIL), 175–195 (VGWL…LVWI), and 221–241 (IFSI…PSPI). Residues 250 to 308 (TEEGWESEEETDVEIETASETKGTKQEQEGSTEEDPSPSLFSEEKEDPDKIDETEEIRV) form a disordered region. Composition is skewed to acidic residues over residues 252 to 266 (EGWE…EIET) and 293 to 304 (EKEDPDKIDETE). A helical transmembrane segment spans residues 774–794 (LILIIQSIFRKYILLPSLIIV). A disordered region spans residues 1032-1057 (TKGLMKEKNSNAKKRGSPNKTSFNRK). Residues 1042–1057 (NAKKRGSPNKTSFNRK) show a composition bias toward basic residues. A helical membrane pass occupies residues 1081–1101 (FYLFITIFIKRIYIDIFVCII).

Belongs to the TIC214 family. As to quaternary structure, part of the Tic complex.

Its subcellular location is the plastid. It is found in the chloroplast inner membrane. Its function is as follows. Involved in protein precursor import into chloroplasts. May be part of an intermediate translocation complex acting as a protein-conducting channel at the inner envelope. The polypeptide is Protein TIC 214 (Daucus carota (Wild carrot)).